The following is a 1305-amino-acid chain: Contactin-associated protein-like 5 (1305 aa).

An N-terminal signal peptide occupies residues Met-1–Ser-24. The Extracellular portion of the chain corresponds to Ala-25–Ser-1236. Positions Cys-30–Cys-174 constitute an F5/8 type C domain. The cysteines at positions 30 and 174 are disulfide-linked. Laminin G-like domains follow at residues Val-180–Cys-360 and Pro-367–Cys-544. Residues Asn-282, Asn-355, and Asn-496 are each glycosylated (N-linked (GlcNAc...) asparagine). An intrachain disulfide couples Cys-329 to Cys-360. 4 disulfide bridges follow: Cys-512–Cys-544, Cys-550–Cys-561, Cys-555–Cys-570, and Cys-572–Cys-582. The 38-residue stretch at Ile-546–His-583 folds into the EGF-like 1 domain. The 207-residue stretch at Asn-584–Trp-790 folds into the Fibrinogen C-terminal domain. N-linked (GlcNAc...) asparagine glycosylation occurs at Asn-622. The Laminin G-like 3 domain occupies Asn-791–Cys-956. Disulfide bonds link Cys-929–Cys-956, Cys-960–Cys-973, Cys-967–Cys-982, Cys-984–Cys-994, and Cys-1163–Cys-1198. One can recognise an EGF-like 2 domain in the interval Pro-957–Lys-995. The Laminin G-like 4 domain occupies Ala-1000–Cys-1198. The helical transmembrane segment at Ala-1237–Met-1257 threads the bilayer. Over Thr-1258 to Ile-1305 the chain is Cytoplasmic.

This sequence belongs to the neurexin family.

Its subcellular location is the membrane. Functionally, may play a role in the correct development and proper functioning of the peripheral and central nervous system and be involved in cell adhesion and intercellular communication. In Canis lupus familiaris (Dog), this protein is Contactin-associated protein-like 5 (CNTNAP5).